A 356-amino-acid polypeptide reads, in one-letter code: Glutamine synthetase (356 aa).

The 81-residue stretch at I19–G99 folds into the GS beta-grasp domain. The GS catalytic domain maps to K106–P356.

It belongs to the glutamine synthetase family. As to quaternary structure, homooctamer.

The protein localises to the cytoplasm. It carries out the reaction L-glutamate + NH4(+) + ATP = L-glutamine + ADP + phosphate + H(+). This chain is Glutamine synthetase, found in Hordeum vulgare (Barley).